The following is a 185-amino-acid chain: NAD(P)H-quinone oxidoreductase subunit J (185 aa).

The protein belongs to the complex I 30 kDa subunit family. In terms of assembly, NDH-1 can be composed of about 15 different subunits; different subcomplexes with different compositions have been identified which probably have different functions.

Its subcellular location is the cellular thylakoid membrane. It catalyses the reaction a plastoquinone + NADH + (n+1) H(+)(in) = a plastoquinol + NAD(+) + n H(+)(out). The catalysed reaction is a plastoquinone + NADPH + (n+1) H(+)(in) = a plastoquinol + NADP(+) + n H(+)(out). Functionally, NDH-1 shuttles electrons from an unknown electron donor, via FMN and iron-sulfur (Fe-S) centers, to quinones in the respiratory and/or the photosynthetic chain. The immediate electron acceptor for the enzyme in this species is believed to be plastoquinone. Couples the redox reaction to proton translocation, and thus conserves the redox energy in a proton gradient. Cyanobacterial NDH-1 also plays a role in inorganic carbon-concentration. In Prochlorococcus marinus (strain MIT 9303), this protein is NAD(P)H-quinone oxidoreductase subunit J.